Consider the following 297-residue polypeptide: Probable endonuclease 4 (297 aa).

Positions 68, 109, 144, 178, 181, 213, 226, 228, and 258 each coordinate Zn(2+).

The protein belongs to the AP endonuclease 2 family. Zn(2+) serves as cofactor.

It carries out the reaction Endonucleolytic cleavage to 5'-phosphooligonucleotide end-products.. In terms of biological role, endonuclease IV plays a role in DNA repair. It cleaves phosphodiester bonds at apurinic or apyrimidinic (AP) sites, generating a 3'-hydroxyl group and a 5'-terminal sugar phosphate. The protein is Probable endonuclease 4 of Lysinibacillus sphaericus (strain C3-41).